Consider the following 301-residue polypeptide: Rhodopsin (301 aa).

Over 1–18 (LHMIHLHWYQYPPMNPMM) the chain is Extracellular. The chain crosses the membrane as a helical span at residues 19–43 (YPLLLIFMLFTGILCLAGNFVTIWV). The Cytoplasmic portion of the chain corresponds to 44 to 55 (FMNTKSLRTPAN). The helical transmembrane segment at 56 to 78 (LLVVNLAMSDFLMMFTMFPPMMV) threads the bilayer. At 79 to 92 (TCYYHTWTLGPTFC) the chain is on the extracellular side. Cys92 and Cys169 are disulfide-bonded. A helical transmembrane segment spans residues 93-115 (QVYAFLGNLCGCASIWTMVFITF). The 'Ionic lock' involved in activated form stabilization signature appears at 116-118 (DRY). Over 116 to 134 (DRYNVIVKGVAGEPLSTKK) the chain is Cytoplasmic. The helical transmembrane segment at 135–155 (ASLWILSVWVLSTAWCIAPFF) threads the bilayer. Over 156–182 (GWNHYVPEGNLTGCGTDYLSEDILSRS) the chain is Extracellular. Residue Asn165 is glycosylated (N-linked (GlcNAc...) asparagine). Residues 183–204 (YLYIYSTWVYFLPLAITIYCYV) traverse the membrane as a helical segment. The Cytoplasmic segment spans residues 205–245 (FIIKAVAAHEKGMRDQAKKMGIKSLRNEEAQKTSAECRLAK). A helical membrane pass occupies residues 246–267 (NAMTTVALWFIAWTPCLLINWV). The Extracellular portion of the chain corresponds to 268–278 (GMFARSYLSPV). The chain crosses the membrane as a helical span at residues 279 to 300 (YTIWGYVFAKANAVYNPIVYAI). Residue Lys288 is modified to N6-(retinylidene)lysine.

The protein belongs to the G-protein coupled receptor 1 family. Opsin subfamily. As to quaternary structure, homodimer. Interacts with GNAQ. In terms of processing, contains one covalently linked retinal chromophore.

The protein resides in the cell projection. The protein localises to the rhabdomere membrane. Its function is as follows. Photoreceptor required for image-forming vision at low light intensity. Can use both retinal and 3-dehydroretinal as visual pigment. Light-induced isomerization of 11-cis to all-trans retinal triggers a conformational change that activates signaling via G-proteins. Signaling via GNAQ probably mediates the activation of phospholipase C. The polypeptide is Rhodopsin (RHO) (Cambarus hubrichti (Salem cave crayfish)).